Reading from the N-terminus, the 149-residue chain is Envelope glycoprotein UL4 (149 aa).

The N-terminal stretch at 1 to 18 (MMLRTWISLPMVLLDAYC) is a signal peptide. N-linked (GlcNAc...) asparagine; by host glycans are attached at residues N46, N51, N59, N67, N105, N109, N119, N136, and N145.

This sequence belongs to the RL11 family. N-glycosylated and possibly O-glycosylated.

It is found in the virion membrane. The polypeptide is Envelope glycoprotein UL4 (UL4) (Human cytomegalovirus (strain Merlin) (HHV-5)).